The chain runs to 67 residues: Large ribosomal subunit protein bL35 (67 aa).

It belongs to the bacterial ribosomal protein bL35 family.

The sequence is that of Large ribosomal subunit protein bL35 from Rhizobium johnstonii (strain DSM 114642 / LMG 32736 / 3841) (Rhizobium leguminosarum bv. viciae).